Reading from the N-terminus, the 591-residue chain is L-fucose isomerase (591 aa).

Catalysis depends on proton acceptor residues E337 and D361. Mn(2+)-binding residues include E337, D361, and H528.

Belongs to the L-fucose isomerase family. In terms of assembly, homohexamer. It depends on Mn(2+) as a cofactor.

It localises to the cytoplasm. It carries out the reaction L-fucose = L-fuculose. The catalysed reaction is D-arabinose = D-ribulose. The enzyme catalyses L-xylopyranose = L-xylulose. Its pathway is carbohydrate degradation; L-fucose degradation; L-lactaldehyde and glycerone phosphate from L-fucose: step 1/3. Inhibited by ribitol, L-arabitol and dulcitol. Isomerization of L-xylulose to L-xylose is inhibited by xylitol. Converts the aldose L-fucose into the corresponding ketose L-fuculose. Also converts D-arabinose into D-ribulose. In addition, catalyzes the isomerization of L-xylulose to L-xylose. The sequence is that of L-fucose isomerase from Escherichia coli (strain K12).